An 87-amino-acid polypeptide reads, in one-letter code: LYR motif-containing protein 2 (87 aa).

Residues 1–19 constitute a mitochondrion transit peptide; that stretch reads MGSRLPPAALTLKQFLVRQ.

It belongs to the complex I LYR family.

It is found in the mitochondrion. In terms of biological role, involved in efficient integration of the N-module into mitochondrial respiratory chain complex I. This Xenopus tropicalis (Western clawed frog) protein is LYR motif-containing protein 2 (lyrm2).